A 401-amino-acid chain; its full sequence is ATP phosphoribosyltransferase regulatory subunit (401 aa).

The protein belongs to the class-II aminoacyl-tRNA synthetase family. HisZ subfamily. In terms of assembly, heteromultimer composed of HisG and HisZ subunits.

It is found in the cytoplasm. It participates in amino-acid biosynthesis; L-histidine biosynthesis; L-histidine from 5-phospho-alpha-D-ribose 1-diphosphate: step 1/9. Functionally, required for the first step of histidine biosynthesis. May allow the feedback regulation of ATP phosphoribosyltransferase activity by histidine. In Cyanothece sp. (strain PCC 7425 / ATCC 29141), this protein is ATP phosphoribosyltransferase regulatory subunit.